Reading from the N-terminus, the 141-residue chain is Hemoglobin subunit alpha-D (141 aa).

The Globin domain occupies 1–141 (MLTAEDKKLI…VAAVLAEKYR (141 aa)). 2 residues coordinate heme b: His58 and His87.

The protein belongs to the globin family. In terms of assembly, heterotetramer of two alpha-D chains and two beta chains. In terms of tissue distribution, red blood cells.

Involved in oxygen transport from the lung to the various peripheral tissues. This chain is Hemoglobin subunit alpha-D (HBAD), found in Accipiter gentilis (Northern goshawk).